The chain runs to 350 residues: Thymidine kinase (350 aa).

ATP is bound at residue 17–24; it reads GPFGIGKT. The active-site Proton acceptor is the glutamate 45. Glutamine 86 is a binding site for substrate. ATP is bound at residue arginine 176. Arginine 182 lines the substrate pocket.

This sequence belongs to the herpesviridae thymidine kinase family. In terms of assembly, homodimer.

It carries out the reaction thymidine + ATP = dTMP + ADP + H(+). Functionally, catalyzes the transfer of the gamma-phospho group of ATP to thymidine to generate dTMP in the salvage pathway of pyrimidine synthesis. The dTMP serves as a substrate for DNA polymerase during viral DNA replication. Allows the virus to be reactivated and to grow in non-proliferative cells lacking a high concentration of phosphorylated nucleic acid precursors. This is Thymidine kinase from Gallus gallus (Chicken).